Reading from the N-terminus, the 97-residue chain is Large ribosomal subunit protein eL21 (97 aa).

Belongs to the eukaryotic ribosomal protein eL21 family.

In Methanococcoides burtonii (strain DSM 6242 / NBRC 107633 / OCM 468 / ACE-M), this protein is Large ribosomal subunit protein eL21.